Reading from the N-terminus, the 813-residue chain is Sorting nexin-29 (813 aa).

The RUN domain occupies 36-180; sequence SDSDSRVTCL…ILFAINIDNK (145 aa). 5 positions are modified to phosphoserine: Ser-268, Ser-291, Ser-292, Ser-330, and Ser-344. The segment at 269–299 is disordered; it reads FDDEEDEQNSGDVFKKTPGAGESSEDNSDRS. Residues 346 to 357 show a composition bias toward acidic residues; that stretch reads DDEDVDENEDDV. A disordered region spans residues 346 to 378; that stretch reads DDEDVDENEDDVYGNSSGRKHRGHSESPEKPLE. Ser-445 and Ser-450 each carry phosphoserine. The stretch at 466–545 forms a coiled coil; sequence TISELRQATV…VLKVQLKKYV (80 aa). At Ser-639 the chain carries Phosphoserine. Thr-641 carries the post-translational modification Phosphothreonine. A phosphoserine mark is found at Ser-642 and Ser-646. The 124-residue stretch at 656-779 folds into the PX domain; the sequence is ALINVWIPSV…PFFVDITPPG (124 aa). A disordered region spans residues 778 to 813; sequence PGEPVNSRPKAASRFPKLSRGQPRETRNVEPQSGDL.

This sequence belongs to the sorting nexin family.

This is Sorting nexin-29 (SNX29) from Homo sapiens (Human).